A 133-amino-acid chain; its full sequence is Late embryogenesis abundant protein B19.3 (133 aa).

Residues methionine 1–serine 133 are disordered. Composition is skewed to basic and acidic residues over residues glutamate 7 to glutamate 19, glutamate 32 to arginine 102, and glycine 113 to serine 133. 3 tandem repeats follow at residues glycine 24–arginine 43, glycine 44–lysine 63, and glycine 64–lysine 83. Positions glycine 24–lysine 83 are 3 X 20 AA tandem repeats.

The protein belongs to the small hydrophilic plant seed protein family.

Lea proteins are late embryonic proteins abundant in higher plant seed embryos. The polypeptide is Late embryogenesis abundant protein B19.3 (B19.3) (Hordeum vulgare (Barley)).